The chain runs to 130 residues: Small ribosomal subunit protein uS8 (130 aa).

It belongs to the universal ribosomal protein uS8 family. Part of the 30S ribosomal subunit. Contacts proteins S5 and S12.

Functionally, one of the primary rRNA binding proteins, it binds directly to 16S rRNA central domain where it helps coordinate assembly of the platform of the 30S subunit. The sequence is that of Small ribosomal subunit protein uS8 from Shewanella halifaxensis (strain HAW-EB4).